The primary structure comprises 489 residues: Netrin-5 (489 aa).

The N-terminal stretch at 1–16 is a signal peptide; the sequence is MPVTFALLLLLGQATA. N62 carries N-linked (GlcNAc...) asparagine glycosylation. Intrachain disulfides connect C157–C166, C159–C175, C177–C186, C189–C209, C212–C221, C214–C239, C242–C251, C254–C272, C275–C287, C277–C294, C296–C305, C308–C322, C345–C418, C349–C420, and C364–C475. 3 Laminin EGF-like domains span residues 157–211, 212–274, and 275–324; these read CQCH…PCLP, CSCN…ACRA, and CQCH…PCQR. Positions 345–475 constitute an NTR domain; it reads CQNYCNMSDT…LQQEERAGGC (131 aa). The tract at residues 470 to 489 is disordered; it reads ERAGGCRGVRAPTPSPRPEH.

It is found in the secreted. In terms of biological role, plays a role in neurogenesis. Prevents motor neuron cell body migration out of the neural tube. The chain is Netrin-5 (NTN5) from Homo sapiens (Human).